The primary structure comprises 501 residues: E3 ubiquitin-protein ligase TRIM35 (501 aa).

M1 is subject to N-acetylmethionine. S8 is modified (phosphoserine). The RING-type zinc-finger motif lies at 21 to 61 (CAVCYDPFRDAVTLRCGHNFCRRCVSGCWEVQTTPSCPVCK). The B box-type zinc finger occupies 96–137 (RSPRPCRAHRAPLTLFCVEDKELLCCACQADARHQEHRVQPI). Positions 101, 104, 123, and 129 each coordinate Zn(2+). The stretch at 209–252 (MKEESRKKHLLAEEKMKQLAEQTEALAREIERLQMEMKEDDMTF) forms a coiled coil. The B30.2/SPRY domain maps to 284-495 (LESLQYRVWK…LRICHLRVSI (212 aa)).

Interacts with PKM isoform M2, but not isoform M1; this interaction may compete with that between PKM and FGFR1, and hence reduces FGFR1-dependent tyrosine phosphorylation of PKM. Interacts with IRF7; this interaction promotes IRF7 proteasomal degradation. Interacts with TRAF3; this interaction promotes TRAF3 activation.

It localises to the cytoplasm. The protein resides in the nucleus. The enzyme catalyses S-ubiquitinyl-[E2 ubiquitin-conjugating enzyme]-L-cysteine + [acceptor protein]-L-lysine = [E2 ubiquitin-conjugating enzyme]-L-cysteine + N(6)-ubiquitinyl-[acceptor protein]-L-lysine.. Its pathway is protein modification; protein ubiquitination. In terms of biological role, E3 ubiquitin-protein ligase that participates in multiple biological processes including cell death, glucose metabolism, and in particular, the innate immune response. Mediates 'Lys-63'-linked polyubiquitination of TRAF3 thereby promoting type I interferon production via RIG-I signaling pathway. Can also catalyze 'Lys-48'-linked polyubiquitination and proteasomal degradation of viral proteins such as influenza virus PB2. Acts as a negative feedback regulator of TLR7- and TLR9-triggered signaling. Mechanistically, promotes the 'Lys-48'-linked ubiquitination of IRF7 and induces its degradation via a proteasome-dependent pathway. Reduces FGFR1-dependent tyrosine phosphorylation of PKM, inhibiting PKM-dependent lactate production, glucose metabolism, and cell growth. In Rattus norvegicus (Rat), this protein is E3 ubiquitin-protein ligase TRIM35 (Trim35).